The chain runs to 563 residues: Pre-hexon-linking protein IIIa (563 aa).

The interval 1–117 (MRKRRTLTAP…ALLHRVSKYN (117 aa)) is peripentonal hexon-tethering domain. A binding to hexon-linking protein region spans residues 148–261 (GSLTALNSFL…FTDSVSISRD (114 aa)). The residue at position 235 (Ser-235) is a Phosphoserine; by host. A Phosphothreonine; by host modification is found at Thr-284. Residues 449–472 (RTESRSVSRVPTPASSRRSSVAMA) are disordered. Ser-452 and Ser-456 each carry phosphoserine; by host. The segment covering 462–472 (ASSRRSSVAMA) has biased composition (low complexity). Phosphoserine; by host is present on residues Ser-475 and Ser-486. The disordered stretch occupies residues 522–543 (KYSSAISSDESDDGMSKPDKFL). A propeptide spanning residues 549–563 (GNPFAHLRPKLGRCL) is cleaved from the precursor.

It belongs to the adenoviridae hexon-linking protein IIIa family. In terms of assembly, interacts with hexon proteins; this interaction tethers the peripentonal hexons to hexons situated in the facet. Interacts with the penton protein (via N-terminus). Interacts with packaging protein 3; this interaction is required to promote correct genome packaging. In terms of processing, cleaved near the C-terminus by the viral protease during virion maturation to form the mature protein.

Its subcellular location is the virion. The protein resides in the host nucleus. Its function is as follows. Structural component of the virion that acts as a cement protein on the capsid exterior which mediates the interactions between the hexons, including the peripentonal hexons, and reaches all the way to the penton vertices. Two hexon linking proteins IIIa, one from each facet, stabilize the unique edge interface between a pair of facets. As the virus enters the host cell, hexon linking proteins IIIa are shed concomitant with virion acidification in the endosome. During virus assembly, seems to play a role in the serotype specificity of the packaging of viral DNA via its interaction with packaging protein 3. In Canis lupus familiaris (Dog), this protein is Pre-hexon-linking protein IIIa.